The following is a 57-amino-acid chain: Large ribosomal subunit protein bL32 (57 aa).

Positions 1–19 (MAVPKRRMSRSNTRSRRSQ) are enriched in basic residues. A disordered region spans residues 1–22 (MAVPKRRMSRSNTRSRRSQWKA).

It belongs to the bacterial ribosomal protein bL32 family.

The sequence is that of Large ribosomal subunit protein bL32 from Rhodococcus jostii (strain RHA1).